The chain runs to 338 residues: Ketol-acid reductoisomerase (NADP(+)) (338 aa).

One can recognise a KARI N-terminal Rossmann domain in the interval 1–181 (MKVFYDKDCD…GGGRAGIIET (181 aa)). NADP(+) is bound by residues 24–27 (YGSQ), Arg-47, and Ser-52. His-107 is a catalytic residue. Position 133 (Gly-133) interacts with NADP(+). Residues 182 to 327 (NFREETETDL…AKLRAMMPWI (146 aa)) form the KARI C-terminal knotted domain. Positions 190, 194, 226, and 230 each coordinate Mg(2+). Residue Ser-251 participates in substrate binding.

The protein belongs to the ketol-acid reductoisomerase family. Mg(2+) is required as a cofactor.

It catalyses the reaction (2R)-2,3-dihydroxy-3-methylbutanoate + NADP(+) = (2S)-2-acetolactate + NADPH + H(+). The enzyme catalyses (2R,3R)-2,3-dihydroxy-3-methylpentanoate + NADP(+) = (S)-2-ethyl-2-hydroxy-3-oxobutanoate + NADPH + H(+). Its pathway is amino-acid biosynthesis; L-isoleucine biosynthesis; L-isoleucine from 2-oxobutanoate: step 2/4. It participates in amino-acid biosynthesis; L-valine biosynthesis; L-valine from pyruvate: step 2/4. Functionally, involved in the biosynthesis of branched-chain amino acids (BCAA). Catalyzes an alkyl-migration followed by a ketol-acid reduction of (S)-2-acetolactate (S2AL) to yield (R)-2,3-dihydroxy-isovalerate. In the isomerase reaction, S2AL is rearranged via a Mg-dependent methyl migration to produce 3-hydroxy-3-methyl-2-ketobutyrate (HMKB). In the reductase reaction, this 2-ketoacid undergoes a metal-dependent reduction by NADPH to yield (R)-2,3-dihydroxy-isovalerate. The protein is Ketol-acid reductoisomerase (NADP(+)) of Herminiimonas arsenicoxydans.